Reading from the N-terminus, the 501-residue chain is ADP,ATP carrier protein 3 (501 aa).

A run of 12 helical transmembrane segments spans residues 23–43 (LKLF…FGAL), 59–79 (IISF…TVLY), 90–110 (YIFY…AYII), 146–166 (YALM…LMFW), 183–203 (PVLG…LVFF), 227–247 (IILQ…MFLF), 293–313 (IALL…PWKA), 326–346 (VNFM…FMII), 361–381 (LLTP…IIFI), 383–403 (EIGT…VGAI), 446–466 (FGKS…PTAT), and 470–490 (IIIY…WNII).

It belongs to the ADP/ATP translocase tlc family.

It is found in the cell membrane. Its function is as follows. Provides the rickettsial cell with host ATP in exchange for rickettsial ADP. This is an obligate exchange system. This energy acquiring activity is an important component of rickettsial parasitism. The protein is ADP,ATP carrier protein 3 (tlcC) of Rickettsia typhi (strain ATCC VR-144 / Wilmington).